A 378-amino-acid chain; its full sequence is Queuine tRNA-ribosyltransferase (378 aa).

Aspartate 91 (proton acceptor) is an active-site residue. Substrate is bound by residues aspartate 91–phenylalanine 95, aspartate 145, glutamine 189, and glycine 216. Residues glycine 247–aspartate 253 form an RNA binding region. The active-site Nucleophile is aspartate 266. Residues threonine 271–arginine 275 form an RNA binding; important for wobble base 34 recognition region. 4 residues coordinate Zn(2+): cysteine 304, cysteine 306, cysteine 309, and histidine 335.

It belongs to the queuine tRNA-ribosyltransferase family. In terms of assembly, homodimer. Within each dimer, one monomer is responsible for RNA recognition and catalysis, while the other monomer binds to the replacement base PreQ1. Zn(2+) is required as a cofactor.

The enzyme catalyses 7-aminomethyl-7-carbaguanine + guanosine(34) in tRNA = 7-aminomethyl-7-carbaguanosine(34) in tRNA + guanine. Its pathway is tRNA modification; tRNA-queuosine biosynthesis. Functionally, catalyzes the base-exchange of a guanine (G) residue with the queuine precursor 7-aminomethyl-7-deazaguanine (PreQ1) at position 34 (anticodon wobble position) in tRNAs with GU(N) anticodons (tRNA-Asp, -Asn, -His and -Tyr). Catalysis occurs through a double-displacement mechanism. The nucleophile active site attacks the C1' of nucleotide 34 to detach the guanine base from the RNA, forming a covalent enzyme-RNA intermediate. The proton acceptor active site deprotonates the incoming PreQ1, allowing a nucleophilic attack on the C1' of the ribose to form the product. After dissociation, two additional enzymatic reactions on the tRNA convert PreQ1 to queuine (Q), resulting in the hypermodified nucleoside queuosine (7-(((4,5-cis-dihydroxy-2-cyclopenten-1-yl)amino)methyl)-7-deazaguanosine). The chain is Queuine tRNA-ribosyltransferase from Vibrio atlanticus (strain LGP32) (Vibrio splendidus (strain Mel32)).